The following is a 150-amino-acid chain: CASP-like protein 2 (150 aa).

Topologically, residues 1–17 (MKPEAGDGRSGWRWVAT) are cytoplasmic. A helical membrane pass occupies residues 18–38 (FDLILRLAAIVATSTAVLAAM). Residues 39-41 (GKT) are Extracellular-facing. A helical membrane pass occupies residues 42 to 62 (FVVVVNGVACFYLLMSLPVSI). The Cytoplasmic portion of the chain corresponds to 63 to 82 (FNIMRPGACPANRAVLTALD). Residues 83 to 103 (MVTVALVTAGALVAGILYLVH) form a helical membrane-spanning segment. The Extracellular portion of the chain corresponds to 104 to 121 (KAGDTHADWFSIWSQLDS). A helical membrane pass occupies residues 122–142 (LSYLAVLALILHVLLSGSILY). At 143-150 (KQALNIMF) the chain is on the cytoplasmic side.

This sequence belongs to the Casparian strip membrane proteins (CASP) family. Homodimer and heterodimers.

The protein resides in the cell membrane. The polypeptide is CASP-like protein 2 (Picea sitchensis (Sitka spruce)).